Consider the following 244-residue polypeptide: Tetraspanin-7 (244 aa).

The Cytoplasmic segment spans residues 1–11; it reads METKPVITCLK. Residues 12 to 35 traverse the membrane as a helical segment; sequence TLLIIYSFVFWITGVILLAVGVWG. Topologically, residues 36 to 51 are extracellular; that stretch reads KLTLGTYISLIAENST. N-linked (GlcNAc...) asparagine glycosylation occurs at asparagine 49. The chain crosses the membrane as a helical span at residues 52–70; that stretch reads NAPYVLIGTGTTIVVFGLF. Residues 71-81 are Cytoplasmic-facing; that stretch reads GCFATCRGSPW. The chain crosses the membrane as a helical span at residues 82 to 107; sequence MLKLYAMFLSLVFLAELVAGISGFVF. Residues 108 to 208 are Extracellular-facing; it reads RHEIKDTFLR…LVTSFMETNM (101 aa). 4 N-linked (GlcNAc...) asparagine glycosylation sites follow: asparagine 150, asparagine 153, asparagine 172, and asparagine 183. The helical transmembrane segment at 209–229 threads the bilayer; the sequence is GIIAGVAFGIAFSQLIGMLLA. Topologically, residues 230-244 are cytoplasmic; sequence CCLSRFITANQYEMV.

Belongs to the tetraspanin (TM4SF) family.

Its subcellular location is the membrane. In terms of biological role, may be involved in cell proliferation and cell motility. This is Tetraspanin-7 (TSPAN7) from Pan troglodytes (Chimpanzee).